Here is a 987-residue protein sequence, read N- to C-terminus: MPMDKTFNAAEAEARLYDAWEKAGAFRAGANASRPETFCIMIPPPNVTGSLHMGHAFNNTLQDILTRWHRMRGFDTLWQPGQDHAGIATQMVVERELARAGNPGRREMGREAFLEKVWEWKEQSGGTIVNQLKRLGASCDWSRNAFTMDPNFQRAVLKVFVDLYEKGFIYRGKRLVNWDPHFETAISDLEVEQVEVNGNMWRLRYQLADGATYRHPVAFDEEGRPTEWEERDYLTVATTRPETMLGDTGIAVNPSDERYAHLIGKEVVLPLVGRRIPIVADDYADPSKGTGAVKITPAHDFNDWGVGQRTGLRAINVMSGRATMFLIENPDFTEGCAPSEEALALDGLDRYEARKRVVALAEEQGWLDGIDQDRHMVPHGDRSKVAIEPMLTDQWFVDTAQIVQPAIDAVRTGRTEILPERDAKTYFHWLENIEPWCISRQLWWGHQIPVWYGLDIWPARFEDDGDDTLDEVEIFELLEDGAFNHADPTHHCAFDFEGVSEKFLDDLASLPHPLNNARVVEVASRAEAIDRLAQALADYNLNEDPTHLVYPVWRDPDVLDTWFSSGLWPIGTLGWPEETPELARYFPTNVLITGFDIIFFWVARMMMMQLAVVNEVPFKTVYVHALVRDEKGKKMSKSLGNVLDPLELIDEFGADAVRFTLTAMAAMGRDLKLSTARIQGYRNFGTKLWNACRFAEMNGVWEGHGTQAAPPAATATVNRWIIGETGRVREEVDAALAAYRFDSAANALYAFVWGKVCDWYVEFSKPLFDTEAAAETRATMGWVLDQCMVLLHPIMPFITEDLWATTGSRTKMLVHTDWPSFGAELVDPAADREMSWVISLIEEIRSARAQVHVPAGLKLPVVQLALDAAGREALARNEALILRLARLEGFTEAASAPKGALTIAVEGGSFAIPLEGVIDIGAEKARLAKTLEKLEKDMAGLRGRLGNPNFVASAPEEVVDEARTRLEQGEEEGAKLSAALARLSEIA.

Positions 45-55 (PNVTGSLHMGH) match the 'HIGH' region motif. The 'KMSKS' region signature appears at 634–638 (KMSKS). Lys637 lines the ATP pocket. Positions 917–985 (VIDIGAEKAR…LSAALARLSE (69 aa)) form a coiled coil.

It belongs to the class-I aminoacyl-tRNA synthetase family. ValS type 1 subfamily. As to quaternary structure, monomer.

Its subcellular location is the cytoplasm. It carries out the reaction tRNA(Val) + L-valine + ATP = L-valyl-tRNA(Val) + AMP + diphosphate. Its function is as follows. Catalyzes the attachment of valine to tRNA(Val). As ValRS can inadvertently accommodate and process structurally similar amino acids such as threonine, to avoid such errors, it has a 'posttransfer' editing activity that hydrolyzes mischarged Thr-tRNA(Val) in a tRNA-dependent manner. In Cereibacter sphaeroides (strain ATCC 17029 / ATH 2.4.9) (Rhodobacter sphaeroides), this protein is Valine--tRNA ligase.